We begin with the raw amino-acid sequence, 635 residues long: ADP-ribosylation factor-binding protein GGA1 (635 aa).

Residue Met-1 is modified to N-acetylmethionine. The 131-residue stretch at 17-147 folds into the VHS domain; that stretch reads ATNPLNKELN…MLKKQGIVKS (131 aa). Positions 114 to 273 are interaction with ARF3; sequence KILELLYSWT…RLASDTEDND (160 aa). Residues 171–298 enclose the GAT domain; that stretch reads DEEKSKMLAR…VINLYKQLVR (128 aa). Residue Ser-185 is modified to Phosphoserine. Residues 299–505 are unstructured hinge; that stretch reads GEEVNGDATA…ITVPLESIKP (207 aa). The interval 305–349 is disordered; sequence DATASSIPGSTSALLDLSGLDLPPPGTTQPATPTRPGNQSSPEQL. Positions 313-325 are enriched in low complexity; sequence GSTSALLDLSGLD. Ser-354 bears the Phosphoserine mark. Positions 357 to 361 match the Autoinhibitory motif; that stretch reads DDELM. Disordered stretches follow at residues 362 to 422 and 455 to 490; these read SLGL…LDDL and RDLQSKSSSPSPGAASLLHTTSPEPPGPPPQATPTE. Polar residues predominate over residues 383–393; it reads NFQSSDGTESS. Ser-417 carries the post-translational modification Phosphoserine. The segment covering 459 to 476 has biased composition (low complexity); it reads SKSSSPSPGAASLLHTTS. Residues 477–486 show a composition bias toward pro residues; the sequence is PEPPGPPPQA. In terms of domain architecture, GAE spans 506-627; it reads SSILPVTVYD…NEMGDVDQFP (122 aa).

It belongs to the GGA protein family. In terms of assembly, monomer. Interacts with GGA2 and GGA3. Binds to clathrin and activated ARFs, including ARF1, ARF5 and ARF6. Interacts with RABEP1 and RABGEF1. Interacts with the type-I membrane proteins LRP3, M6PR/CD-MPR and IGF2R/CI-MPR. Interacts (via N-terminal VHS domain) with SORL1/sorLA and SORT1 (via C-terminal cytosolic domain). Interacts with EPN4. Interacts with CCDC91. Interacts with HEATR5B/p200a. Interacts with SYNRG/gamma-synergin. Interacts (via GAE doamin) with NECAP1 and NECAP2. Interacts (via GAE domain) with AFTPH/aftiphilin. Interacts with TSG101 and UBC. Interacts with RNF11. Interacts (via VHS domain) with BACE1 (via DXXLL motif); the interaction highly increases when BACE1 is phosphorylated at 'Ser-498'. Interacts with CNST. Interacts with ADRA2B. Interacts with ARL3; the interaction recruits, in collaboration with RABEP1, PKD1:PKD2 complex to trans-Golgi network and is required for ciliary targeting. In terms of processing, phosphorylated by CK2 and dephosphorylated by PP2A. Phosphorylation of GGA1 allows the internal DXXLL motif to bind the VHS domain and to inhibit the recognition of cargo signals. Post-translationally, ubiquitinated.

It localises to the golgi apparatus. Its subcellular location is the trans-Golgi network membrane. The protein localises to the endosome membrane. It is found in the early endosome membrane. Its function is as follows. Plays a role in protein sorting and trafficking between the trans-Golgi network (TGN) and endosomes. Mediates the ARF-dependent recruitment of clathrin to the TGN and binds ubiquitinated proteins and membrane cargo molecules with a cytosolic acidic cluster-dileucine (DXXLL) motif. Mediates export of the GPCR receptor ADRA2B to the cell surface. Required for targeting PKD1:PKD2 complex from the trans-Golgi network to the cilium membrane. Regulates retrograde transport of proteins such as phosphorylated form of BACE1 from endosomes to the trans-Golgi network. The polypeptide is ADP-ribosylation factor-binding protein GGA1 (Gga1) (Mus musculus (Mouse)).